Consider the following 213-residue polypeptide: V-type ATP synthase subunit D (213 aa).

It belongs to the V-ATPase D subunit family.

Its function is as follows. Produces ATP from ADP in the presence of a proton gradient across the membrane. The polypeptide is V-type ATP synthase subunit D (Clostridium botulinum (strain Alaska E43 / Type E3)).